The following is a 142-amino-acid chain: MAKKIAGQLKLQVAAGAANPSPPIGPALGQRGINIMEFCKAFNAASQEMEKGSPIPVVITYYQDKSFTFVMKTPPVTYFLKKAANLKSGSKTPGKASAGTISRDKVRTIAEAKMKDLNAADIEAAMRMIEGSARSMGLEVVG.

This sequence belongs to the universal ribosomal protein uL11 family. In terms of assembly, part of the ribosomal stalk of the 50S ribosomal subunit. Interacts with L10 and the large rRNA to form the base of the stalk. L10 forms an elongated spine to which L12 dimers bind in a sequential fashion forming a multimeric L10(L12)X complex. Post-translationally, one or more lysine residues are methylated.

In terms of biological role, forms part of the ribosomal stalk which helps the ribosome interact with GTP-bound translation factors. The sequence is that of Large ribosomal subunit protein uL11 from Brucella anthropi (strain ATCC 49188 / DSM 6882 / CCUG 24695 / JCM 21032 / LMG 3331 / NBRC 15819 / NCTC 12168 / Alc 37) (Ochrobactrum anthropi).